The sequence spans 610 residues: Methionine--tRNA ligase (610 aa).

The short motif at 12-22 (PYANGPRHIGH) is the 'HIGH' region element. Cysteine 144, cysteine 147, cysteine 157, and cysteine 160 together coordinate Zn(2+). The 'KMSKS' region motif lies at 348-352 (KFSSS). Serine 351 serves as a coordination point for ATP.

Belongs to the class-I aminoacyl-tRNA synthetase family. MetG type 1 subfamily. As to quaternary structure, monomer. Requires Zn(2+) as cofactor.

It localises to the cytoplasm. It catalyses the reaction tRNA(Met) + L-methionine + ATP = L-methionyl-tRNA(Met) + AMP + diphosphate. In terms of biological role, is required not only for elongation of protein synthesis but also for the initiation of all mRNA translation through initiator tRNA(fMet) aminoacylation. This Corynebacterium glutamicum (strain R) protein is Methionine--tRNA ligase.